The primary structure comprises 354 residues: Hyaluronan and proteoglycan link protein 1 (354 aa).

A propeptide spanning residues 1–15 is cleaved from the precursor; sequence MKSLLLLVLISICGA. N-linked (GlcNAc...) asparagine glycosylation is found at Asn21 and Asn56. The Ig-like V-type domain occupies 38 to 152; sequence PRLLVEAEQA…EGLEDDTAVV (115 aa). Cystine bridges form between Cys61/Cys139, Cys181/Cys252, Cys205/Cys226, Cys279/Cys349, and Cys304/Cys325. 2 Link domains span residues 159–254 and 259–351; these read VVFP…FCFT and GRFY…YCFR.

Belongs to the HAPLN family.

The protein resides in the secreted. The protein localises to the extracellular space. It localises to the extracellular matrix. Functionally, stabilizes the aggregates of proteoglycan monomers with hyaluronic acid in the extracellular cartilage matrix. This Equus caballus (Horse) protein is Hyaluronan and proteoglycan link protein 1 (HAPLN1).